The following is a 67-amino-acid chain: MGKIRQGFIKRVARELFNKYPNEFTRDFEHNKKKVEELTNVTSKKIRNRIAGYITKLVRMKEEGKIL.

It belongs to the eukaryotic ribosomal protein eS17 family.

The polypeptide is Small ribosomal subunit protein eS17 (Pyrococcus abyssi (strain GE5 / Orsay)).